The sequence spans 555 residues: Transmembrane protein 87A (555 aa).

An N-terminal signal peptide occupies residues 1-21; sequence MAVAAWLQVSPVIFLLLGAQP. The Lumenal segment spans residues 22–225; the sequence is FPLSFLGAGP…YEYLTLEDYP (204 aa). Cystine bridges form between Cys-74-Cys-128 and Cys-89-Cys-431. 3 N-linked (GlcNAc...) asparagine glycosylation sites follow: Asn-79, Asn-157, and Asn-160. The helical transmembrane segment at 226–246 threads the bilayer; it reads LMIFFMVMCIVYVLFGVLWLA. At 247–257 the chain is on the cytoplasmic side; sequence WSACYWRDLLR. Residues 258 to 278 form a helical membrane-spanning segment; it reads IQFWIGAVIFLGMFEKAVFYA. Residues 279-305 lie on the Lumenal side of the membrane; sequence EFQNIRYKGESVQNALVLAELLSAVKR. A helical membrane pass occupies residues 306 to 322; the sequence is SLARTLVIIVSLGYGIV. Residues 323 to 325 are Cytoplasmic-facing; that stretch reads KPR. Residues 326 to 346 traverse the membrane as a helical segment; the sequence is LGVTLHKVVVAGALYLLFSGM. Topologically, residues 347-361 are lumenal; it reads EGVLRVTGAQTDLAS. Residues 362 to 382 form a helical membrane-spanning segment; sequence LAFIPLAFLDTALCWWIFISL. Residues 383-403 lie on the Cytoplasmic side of the membrane; it reads TQTMKLLKLRRNIVKLSLYRH. The helical transmembrane segment at 404-424 threads the bilayer; the sequence is FTNTLILAVAASIVFIIWTTM. Residues 425-437 are Lumenal-facing; sequence KFRIVTCQSDWRE. A helical transmembrane segment spans residues 438–458; sequence LWVDDAIWRLLFSMILFVIMI. Residues 459–555 are Cytoplasmic-facing; the sequence is LWRPSANNQR…ITHFERSKME (97 aa). Positions 491–515 are disordered; sequence SFEGMKMRSTKQEPNGTSKVNKAQE. The segment covering 502 to 511 has biased composition (polar residues); the sequence is QEPNGTSKVN. At Ser-540 the chain carries Phosphoserine.

This sequence belongs to the LU7TM family. TMEM87 subfamily. As to quaternary structure, may interact with STOML3; STOML3 potentiates the mechanosensitive ion channel activity associated with TMEM87A. As to expression, highly expressed in sensory neurons responsive to mechanical force.

The protein resides in the cell membrane. Its subcellular location is the golgi apparatus membrane. The protein localises to the cell projection. It is found in the ruffle. Potential monoatomic ion channel gated by mechanical force, implicated in normal touch sensitivity through the generation of mechanically activated currents. However, a direct channel activity is debated and an alternative could be that it functions as a chaperone for an unidentified mechanosensitive ion channel. Could also be involved in cell mechanosensitivity regulating cell adhesion and migration. May also be involved in retrograde transport from endosomes to the trans-Golgi network (TGN). The sequence is that of Transmembrane protein 87A from Mus musculus (Mouse).